A 288-amino-acid chain; its full sequence is ATP synthase gamma chain (288 aa).

The protein belongs to the ATPase gamma chain family. F-type ATPases have 2 components, CF(1) - the catalytic core - and CF(0) - the membrane proton channel. CF(1) has five subunits: alpha(3), beta(3), gamma(1), delta(1), epsilon(1). CF(0) has three main subunits: a, b and c.

Its subcellular location is the cell inner membrane. Produces ATP from ADP in the presence of a proton gradient across the membrane. The gamma chain is believed to be important in regulating ATPase activity and the flow of protons through the CF(0) complex. The protein is ATP synthase gamma chain of Rickettsia akari (strain Hartford).